A 363-amino-acid chain; its full sequence is Phospho-N-acetylmuramoyl-pentapeptide-transferase (363 aa).

The next 10 membrane-spanning stretches (helical) occupy residues 27–47, 76–96, 97–117, 137–157, 171–191, 202–222, 242–262, 265–285, 292–312, and 340–360; these read SGCA…PFIA, TMGG…WADL, TNGF…VGFA, LGCE…LTPP, VLLP…TGFG, GLAI…SYLV, LAVF…FNAP, AVFM…AVAV, VLCI…IQIF, and KIVI…LATL.

The protein belongs to the glycosyltransferase 4 family. MraY subfamily. The cofactor is Mg(2+).

It localises to the cell inner membrane. The catalysed reaction is UDP-N-acetyl-alpha-D-muramoyl-L-alanyl-gamma-D-glutamyl-meso-2,6-diaminopimeloyl-D-alanyl-D-alanine + di-trans,octa-cis-undecaprenyl phosphate = di-trans,octa-cis-undecaprenyl diphospho-N-acetyl-alpha-D-muramoyl-L-alanyl-D-glutamyl-meso-2,6-diaminopimeloyl-D-alanyl-D-alanine + UMP. It functions in the pathway cell wall biogenesis; peptidoglycan biosynthesis. Functionally, catalyzes the initial step of the lipid cycle reactions in the biosynthesis of the cell wall peptidoglycan: transfers peptidoglycan precursor phospho-MurNAc-pentapeptide from UDP-MurNAc-pentapeptide onto the lipid carrier undecaprenyl phosphate, yielding undecaprenyl-pyrophosphoryl-MurNAc-pentapeptide, known as lipid I. The sequence is that of Phospho-N-acetylmuramoyl-pentapeptide-transferase from Gluconobacter oxydans (strain 621H) (Gluconobacter suboxydans).